A 270-amino-acid chain; its full sequence is MNKSLFKSGCLVRTAHVILTWIITLILFLHNTDLRRCQERGDLLQPLVFSSVLLLSVLLYFTVSLMDPGFVLSDSQTETASGDGDEELEAMIPQEQNSIKQRRCGYCFLLQPMRARHCKWCKRCVRRFDHHCPWIDNCVGELNHRWFLLYLCVQFTAVCWGLQSAWSGFISAPSWQQWFTQNVFLLVAFAVTAVFSVVLLLLLCIHAYLASVNCTTWEFMSRHRILYLKHVDSEENPFDRGVFCNLWSFCCVCGTVAWEKMYIRHNNASV.

Residues 1-8 lie on the Cytoplasmic side of the membrane; that stretch reads MNKSLFKS. The helical transmembrane segment at 9–29 threads the bilayer; that stretch reads GCLVRTAHVILTWIITLILFL. The Lumenal portion of the chain corresponds to 30-45; the sequence is HNTDLRRCQERGDLLQ. Residues 46–66 traverse the membrane as a helical segment; it reads PLVFSSVLLLSVLLYFTVSLM. Topologically, residues 67-145 are cytoplasmic; the sequence is DPGFVLSDSQ…DNCVGELNHR (79 aa). A DHHC domain is found at 102–152; the sequence is RRCGYCFLLQPMRARHCKWCKRCVRRFDHHCPWIDNCVGELNHRWFLLYLC. The S-palmitoyl cysteine intermediate role is filled by cysteine 132. A helical membrane pass occupies residues 146 to 166; the sequence is WFLLYLCVQFTAVCWGLQSAW. Residues 167–182 lie on the Lumenal side of the membrane; that stretch reads SGFISAPSWQQWFTQN. The helical transmembrane segment at 183 to 203 threads the bilayer; it reads VFLLVAFAVTAVFSVVLLLLL. Residues 204–270 are Cytoplasmic-facing; sequence CIHAYLASVN…MYIRHNNASV (67 aa).

This sequence belongs to the DHHC palmitoyltransferase family.

Its subcellular location is the golgi apparatus membrane. The protein resides in the endoplasmic reticulum membrane. It catalyses the reaction L-cysteinyl-[protein] + hexadecanoyl-CoA = S-hexadecanoyl-L-cysteinyl-[protein] + CoA. Its function is as follows. Palmitoyltransferase that catalyzes the addition of palmitate onto various protein substrates. Has a palmitoyltransferase activity toward gephyrin/GPHN, regulating its clustering at synapses and its function in gamma-aminobutyric acid receptor clustering. Acts as an inhibitor of the NLRP3 inflammasome by mediating palmitoylation of NLRP3, thereby promoting NLRP3 degradation by the chaperone-mediated autophagy (CMA) process. The polypeptide is Palmitoyltransferase ZDHHC12-A (Danio rerio (Zebrafish)).